Here is a 460-residue protein sequence, read N- to C-terminus: Serine/threonine-protein kinase cds1 (460 aa).

Positions 60-116 (WRFGRHKSCEVVLNGPRVSNFHFEIYQGHRNDSDESENVVFLHDHSSNGTFLNFERL) constitute an FHA domain. The region spanning 167–433 (YEIIRTLGSG…ESEALQHPWF (267 aa)) is the Protein kinase domain. ATP contacts are provided by residues 173 to 181 (LGSGTFAVV) and K196. Residue D294 is the Proton acceptor of the active site. Over residues 438–453 (THEHRTPPSSSEHEAT) the composition is skewed to basic and acidic residues. The interval 438-460 (THEHRTPPSSSEHEATEQLNSSS) is disordered. Phosphothreonine is present on T443.

It belongs to the protein kinase superfamily. CAMK Ser/Thr protein kinase family. CHEK2 subfamily. In terms of assembly, interacts with rad26. Post-translationally, autophosphorylated.

The enzyme catalyses L-seryl-[protein] + ATP = O-phospho-L-seryl-[protein] + ADP + H(+). It carries out the reaction L-threonyl-[protein] + ATP = O-phospho-L-threonyl-[protein] + ADP + H(+). Its function is as follows. Has a role in the DNA replication-monitoring S/G2 checkpoint system. It is responsible for blocking mitosis in the S phase. It monitors DNA synthesis by interacting with DNA polymerase alpha and sends a signal to block the onset of mitosis while DNA synthesis is in progress. Phosphorylates rad60 and dna2. The chain is Serine/threonine-protein kinase cds1 (cds1) from Schizosaccharomyces pombe (strain 972 / ATCC 24843) (Fission yeast).